A 350-amino-acid chain; its full sequence is Ribosomal RNA large subunit methyltransferase M (350 aa).

Residues 217-220 (APGG), Asp236, Asp256, and Asp272 each bind S-adenosyl-L-methionine. Lys301 serves as the catalytic Proton acceptor.

The protein belongs to the class I-like SAM-binding methyltransferase superfamily. RNA methyltransferase RlmE family. RlmM subfamily. In terms of assembly, monomer.

The protein localises to the cytoplasm. It carries out the reaction cytidine(2498) in 23S rRNA + S-adenosyl-L-methionine = 2'-O-methylcytidine(2498) in 23S rRNA + S-adenosyl-L-homocysteine + H(+). Functionally, catalyzes the 2'-O-methylation at nucleotide C2498 in 23S rRNA. This Teredinibacter turnerae (strain ATCC 39867 / T7901) protein is Ribosomal RNA large subunit methyltransferase M.